Here is a 145-residue protein sequence, read N- to C-terminus: MLLVLLFSLFSVGFGMRVMRRELLKDQPTVLLLGPLEVLTSSSSEDDTPDFPSLRDKRGVDPMSIPRLIKEPPLKKRSGDFKRGDVVYPSAAKQTVPLVRVREPPLKRGQMFLEELLQFNDDAHRQFMDPLRRIRYGPNRLIYTW.

The first 15 residues, 1–15, serve as a signal peptide directing secretion; it reads MLLVLLFSLFSVGFG. Positions 41–65 are disordered; it reads SSSSEDDTPDFPSLRDKRGVDPMSI.

It is found in the secreted. The chain is Neuropeptide-like protein 68 from Caenorhabditis elegans.